The chain runs to 244 residues: 14-3-3 protein beta/alpha-1 (244 aa).

The residue at position 1 (methionine 1) is an N-acetylmethionine.

The protein belongs to the 14-3-3 family. As to quaternary structure, homodimer, and heterodimer with other family members. As to expression, expressed in brain, gill, heart, intestine, kidney, liver, ovary, skin, spleen and testis.

It is found in the cytoplasm. Its function is as follows. Adapter protein implicated in the regulation of a large spectrum of both general and specialized signaling pathways. Binds to a large number of partners, usually by recognition of a phosphoserine or phosphothreonine motif. Binding generally results in the modulation of the activity of the binding partner. The protein is 14-3-3 protein beta/alpha-1 of Oncorhynchus mykiss (Rainbow trout).